Reading from the N-terminus, the 444-residue chain is Alpha-(1,3)-fucosyltransferase B (444 aa).

The Cytoplasmic segment spans residues 1–6; sequence MRLAQR. The helical; Signal-anchor for type II membrane protein transmembrane segment at 7-27 threads the bilayer; that stretch reads YGIALVALLMVGATVLFFWSE. Residues 28–444 are Lumenal-facing; it reads NIINYENIKF…GNNCSNSSNT (417 aa). 3 N-linked (GlcNAc...) asparagine glycosylation sites follow: N279, N437, and N440.

The protein belongs to the glycosyltransferase 10 family.

The protein resides in the golgi apparatus. It is found in the golgi stack membrane. Its pathway is protein modification; protein glycosylation. This is Alpha-(1,3)-fucosyltransferase B (FucTB) from Drosophila melanogaster (Fruit fly).